The chain runs to 282 residues: 2-dehydro-3-deoxyphosphooctonate aldolase (282 aa).

Belongs to the KdsA family.

The protein resides in the cytoplasm. It catalyses the reaction D-arabinose 5-phosphate + phosphoenolpyruvate + H2O = 3-deoxy-alpha-D-manno-2-octulosonate-8-phosphate + phosphate. It participates in carbohydrate biosynthesis; 3-deoxy-D-manno-octulosonate biosynthesis; 3-deoxy-D-manno-octulosonate from D-ribulose 5-phosphate: step 2/3. Its pathway is bacterial outer membrane biogenesis; lipopolysaccharide biosynthesis. The protein is 2-dehydro-3-deoxyphosphooctonate aldolase of Chromobacterium violaceum (strain ATCC 12472 / DSM 30191 / JCM 1249 / CCUG 213 / NBRC 12614 / NCIMB 9131 / NCTC 9757 / MK).